The chain runs to 539 residues: Chaperonin GroEL (539 aa).

ATP-binding positions include Thr29–Pro32, Asp86–Thr90, Gly414, and Asp493.

The protein belongs to the chaperonin (HSP60) family. In terms of assembly, forms a cylinder of 14 subunits composed of two heptameric rings stacked back-to-back. Interacts with the co-chaperonin GroES.

The protein localises to the cytoplasm. The catalysed reaction is ATP + H2O + a folded polypeptide = ADP + phosphate + an unfolded polypeptide.. In terms of biological role, together with its co-chaperonin GroES, plays an essential role in assisting protein folding. The GroEL-GroES system forms a nano-cage that allows encapsulation of the non-native substrate proteins and provides a physical environment optimized to promote and accelerate protein folding. The chain is Chaperonin GroEL from Staphylococcus aureus.